Consider the following 423-residue polypeptide: Gamma-glutamyl phosphate reductase (423 aa).

A compositionally biased stretch (low complexity) spans 1–14 (MTLQAAPRSAAAQQ). The disordered stretch occupies residues 1-25 (MTLQAAPRSAAAQQREPDLRQEVHD). The span at 15-25 (REPDLRQEVHD) shows a compositional bias: basic and acidic residues.

This sequence belongs to the gamma-glutamyl phosphate reductase family.

The protein resides in the cytoplasm. The catalysed reaction is L-glutamate 5-semialdehyde + phosphate + NADP(+) = L-glutamyl 5-phosphate + NADPH + H(+). Its pathway is amino-acid biosynthesis; L-proline biosynthesis; L-glutamate 5-semialdehyde from L-glutamate: step 2/2. Catalyzes the NADPH-dependent reduction of L-glutamate 5-phosphate into L-glutamate 5-semialdehyde and phosphate. The product spontaneously undergoes cyclization to form 1-pyrroline-5-carboxylate. The chain is Gamma-glutamyl phosphate reductase from Mycobacterium ulcerans (strain Agy99).